The following is a 735-amino-acid chain: Wall-associated receptor kinase 1 (735 aa).

An N-terminal signal peptide occupies residues 1 to 24 (MKVQEGLFLVAIFFSLACTQLVKG). The Extracellular portion of the chain corresponds to 25 to 331 (QHQPGENCQN…TTTMSCKRKE (307 aa)). Residues Asn-38, Asn-56, Asn-80, Asn-90, Asn-113, Asn-140, Asn-209, Asn-235, and Asn-250 are each glycosylated (N-linked (GlcNAc...) asparagine). The interval 67 to 254 (RPHVLSDIEV…SICGGNSTCL (188 aa)) is polygalacturonic acid-binding. An EGF-like 1 domain is found at 234-281 (GNQTCEQVGSTSICGGNSTCLDSTPRNGYICRCNEGFDGNPYLSAGCQ). Disulfide bonds link Cys-238/Cys-253, Cys-247/Cys-264, Cys-266/Cys-280, Cys-286/Cys-303, Cys-297/Cys-312, and Cys-314/Cys-327. Positions 282 to 328 (DVNECTTSSTIHRHNCSDPKTCRNKVGGFYCKCQSGYRLDTTTMSCK) constitute an EGF-like 2; calcium-binding domain. Asn-296 carries N-linked (GlcNAc...) asparagine glycosylation. Residues 332–352 (FAWTTILLVTTIGFLVILLGV) form a helical membrane-spanning segment. Over 353–735 (ACIQQRMKHL…VAILDIETGR (383 aa)) the chain is Cytoplasmic. At Thr-398 the chain carries Phosphothreonine. Positions 409 to 692 (YAESRILGQG…RVEKTKHKWS (284 aa)) constitute a Protein kinase domain. ATP is bound by residues 415–423 (LGQGGQGTV) and Lys-437. Tyr-482 carries the post-translational modification Phosphotyrosine. Catalysis depends on Asp-534, which acts as the Proton acceptor. A phosphothreonine mark is found at Thr-568 and Thr-573. Residue Tyr-581 is modified to Phosphotyrosine.

This sequence belongs to the protein kinase superfamily. Ser/Thr protein kinase family. As to quaternary structure, interacts with the glycine-rich proteins GRP3 and GRP3S, and the type 2C protein phosphatase KAPP. Component of a 500 kDa complex, composed of WAK1, GRP3 and KAPP. Interacts with the oxygen-evolving enhancer protein 2 (OEE2). As to expression, predominantly expressed in green tissues such as stems and leaves. Detected at organ junctions.

The protein localises to the membrane. It catalyses the reaction L-seryl-[protein] + ATP = O-phospho-L-seryl-[protein] + ADP + H(+). The enzyme catalyses L-threonyl-[protein] + ATP = O-phospho-L-threonyl-[protein] + ADP + H(+). Functionally, serine/threonine-protein kinase that may function as a signaling receptor of extracellular matrix component. Binding to pectin may have significance in the control of cell expansion, morphogenesis and development. Required during plant's response to pathogen infection and in plant defense against heavy metal toxicity. Phosphorylates the oxygen-evolving enhancer protein 2 (OEE2) in an GRP-3-dependent manner. The sequence is that of Wall-associated receptor kinase 1 (WAK1) from Arabidopsis thaliana (Mouse-ear cress).